A 79-amino-acid polypeptide reads, in one-letter code: Acyl carrier protein (79 aa).

The Carrier domain maps to 2–77 (SDIEARVKKI…NAIDYANTHH (76 aa)). Residue S37 is modified to O-(pantetheine 4'-phosphoryl)serine.

This sequence belongs to the acyl carrier protein (ACP) family. Post-translationally, 4'-phosphopantetheine is transferred from CoA to a specific serine of apo-ACP by AcpS. This modification is essential for activity because fatty acids are bound in thioester linkage to the sulfhydryl of the prosthetic group.

The protein localises to the cytoplasm. Its pathway is lipid metabolism; fatty acid biosynthesis. Its function is as follows. Carrier of the growing fatty acid chain in fatty acid biosynthesis. This is Acyl carrier protein from Polaromonas naphthalenivorans (strain CJ2).